A 165-amino-acid polypeptide reads, in one-letter code: MPANSRSARLTHLDDAGLPTMVDVSDKAVTARSATAESRVRFPAAVAAQLRANGLRSAKGGIVETAVIAGTMAVKRTHELIPFCHPLPIDACRFGIDWAGEQVLDIRCTVRCVHRTGVEMEALTGASVAALTIYDMCKALSHSMSIGPTKLVSKRGGKRDIGAAQ.

Substrate contacts are provided by residues 83 to 85 (FCH) and 120 to 121 (ME). The active site involves Asp-135.

The protein belongs to the MoaC family. As to quaternary structure, homohexamer; trimer of dimers.

It catalyses the reaction (8S)-3',8-cyclo-7,8-dihydroguanosine 5'-triphosphate = cyclic pyranopterin phosphate + diphosphate. Its pathway is cofactor biosynthesis; molybdopterin biosynthesis. Its function is as follows. Catalyzes the conversion of (8S)-3',8-cyclo-7,8-dihydroguanosine 5'-triphosphate to cyclic pyranopterin monophosphate (cPMP). The protein is Cyclic pyranopterin monophosphate synthase of Xanthomonas axonopodis pv. citri (strain 306).